A 207-amino-acid polypeptide reads, in one-letter code: Dephospho-CoA kinase (207 aa).

A DPCK domain is found at 12–207; sequence LIGITGMIGG…LYSTLLGKML (196 aa). An ATP-binding site is contributed by 20–25; it reads GGGKST.

It belongs to the CoaE family.

It is found in the cytoplasm. It catalyses the reaction 3'-dephospho-CoA + ATP = ADP + CoA + H(+). Its pathway is cofactor biosynthesis; coenzyme A biosynthesis; CoA from (R)-pantothenate: step 5/5. In terms of biological role, catalyzes the phosphorylation of the 3'-hydroxyl group of dephosphocoenzyme A to form coenzyme A. In Leptospira interrogans serogroup Icterohaemorrhagiae serovar copenhageni (strain Fiocruz L1-130), this protein is Dephospho-CoA kinase.